We begin with the raw amino-acid sequence, 1115 residues long: Iron-regulated protein FrpA (1115 aa).

Hemolysin-type calcium-binding repeat units follow at residues 755-772 (FGHNKNVSLYGNDGNDTL), 773-790 (IGGAGNDYLEGGSGSDTY), 901-918 (NGGLGDDYLYGADGNDLL), 919-936 (NGDAGNDSIYSGNGNDTL), 937-954 (DGGEGNDALYGYNGNDAL), 955-972 (NGGEGNDHLNGEDGNDTL), and 973-990 (IGGAGNDYLEGGSGSDTY).

It belongs to the RTX prokaryotic toxin (TC 1.C.11) family.

Its subcellular location is the cell outer membrane. The protein resides in the secreted. Its function is as follows. May participate in the pathogenesis of meningococcal disease. The sequence is that of Iron-regulated protein FrpA (frpA) from Neisseria meningitidis serogroup C.